The sequence spans 304 residues: tRNA dimethylallyltransferase (304 aa).

10–17 (GPTASGKS) contacts ATP. 12-17 (TASGKS) provides a ligand contact to substrate. The interval 35-38 (DSRQ) is interaction with substrate tRNA.

Belongs to the IPP transferase family. In terms of assembly, monomer. Mg(2+) serves as cofactor.

The catalysed reaction is adenosine(37) in tRNA + dimethylallyl diphosphate = N(6)-dimethylallyladenosine(37) in tRNA + diphosphate. In terms of biological role, catalyzes the transfer of a dimethylallyl group onto the adenine at position 37 in tRNAs that read codons beginning with uridine, leading to the formation of N6-(dimethylallyl)adenosine (i(6)A). The chain is tRNA dimethylallyltransferase from Gloeothece citriformis (strain PCC 7424) (Cyanothece sp. (strain PCC 7424)).